We begin with the raw amino-acid sequence, 700 residues long: MAQEVLTDLNKVRNIGIMAHIDAGKTTTTERILFYTGVNYKIGETHDGASTTDWMEQEKERGITITSAAVTCFWNNNQINIIDTPGHVDFTVEVERSLRVLDGAVAVFDGKEGVEPQSEQVWRQAAKYDVPRICFVNKMDKMGADFYFTVQTIIDRLGAKPLVLQLPIGAEDDFDGVVDLVEMRAITWRGVVPTGALPTIEEIPADLVEKAAEYREKLLETVAESDEALMEKYFGGEELTVEEIKGAIRKMTVASELYPVICGSAFKNKGVQPMLDAVIDYLPNPLDIGEVVGHKLGDEEVEITRKPSKEEPFSALAFKIAAHPFFGKLTFVRVYSGRIDPGAQVLNATKGKKERIGKLFQMHANKENPVDEAVAGHIYAMIGLKDTTTGDTLCDQASPIVLESMSFPAPVIQVSIEPKTKSDQEKLGVAIQKLAEEDPTFSVELDEETGQTVIGGMGELHLDILVDRMRREFKVEANVGKPQVAYRETITKKVEKHDYTHKKQTGGSGQFAKVIIALEPFVGEDGATYEFENKVSGGRIPREYIPSVDAGAQDAMQYGVLAGYPLVNLKLSLLDGAYHDVDSSEMAFKVAGSQALKEAARKAGPVILEPLMAVEVTTPEEYMGDVIGDLNSRRGQIQAMEERSGARVVKALVPLSEMFGYIGDLRSKTQGRANFSMVFDSYAEVPANVSKEIIAKATGE.

A tr-type G domain is found at 10–286 (NKVRNIGIMA…AVIDYLPNPL (277 aa)). GTP contacts are provided by residues 19-26 (AHIDAGKT), 83-87 (DTPGH), and 137-140 (NKMD).

Belongs to the TRAFAC class translation factor GTPase superfamily. Classic translation factor GTPase family. EF-G/EF-2 subfamily.

Its subcellular location is the cytoplasm. Catalyzes the GTP-dependent ribosomal translocation step during translation elongation. During this step, the ribosome changes from the pre-translocational (PRE) to the post-translocational (POST) state as the newly formed A-site-bound peptidyl-tRNA and P-site-bound deacylated tRNA move to the P and E sites, respectively. Catalyzes the coordinated movement of the two tRNA molecules, the mRNA and conformational changes in the ribosome. This Rhodococcus erythropolis (strain PR4 / NBRC 100887) protein is Elongation factor G.